The chain runs to 907 residues: Catenin alpha-1 (907 aa).

Basic and acidic residues predominate over residues 870–879; sequence VKREKLDDGQ. A disordered region spans residues 870–895; that stretch reads VKREKLDDGQTNKVKRSSQKKHINPV. Over residues 882–892 the composition is skewed to basic residues; the sequence is KVKRSSQKKHI.

The protein belongs to the vinculin/alpha-catenin family. In terms of assembly, interacts with ctnnb1, jupa and cdh2. Interacts with cdh1 during early stages of oogenesis, interaction is no longer present when oocyte develops into the unfertilized egg. Expressed in the skin (at protein level). Expressed in the ovary.

The protein localises to the cell junction. It localises to the adherens junction. It is found in the cytoplasm. Its subcellular location is the cytoskeleton. The protein resides in the cell membrane. The protein localises to the nucleus. Associates with the cytoplasmic domain of a variety of cadherins, forming catenin and cadherin complexes which are further linked to the actin filament network and is thereby involved in cell-cell adhesion. Required for embryonic development, via maintenance of adherens junctions that facilitate the maintenance of the epithelial barrier. This is Catenin alpha-1 from Danio rerio (Zebrafish).